The following is a 763-amino-acid chain: Phosphoglycerol transferase I (763 aa).

4 consecutive transmembrane segments (helical) span residues Met1–Ala21, Trp26–Phe46, Ile77–Ile97, and Phe108–Phe128.

Belongs to the OpgB family.

It localises to the cell inner membrane. It catalyses the reaction a phosphatidylglycerol + a membrane-derived-oligosaccharide D-glucose = a 1,2-diacyl-sn-glycerol + a membrane-derived-oligosaccharide 6-(glycerophospho)-D-glucose.. The protein operates within glycan metabolism; osmoregulated periplasmic glucan (OPG) biosynthesis. Functionally, transfers a phosphoglycerol residue from phosphatidylglycerol to the membrane-bound nascent glucan backbones. The polypeptide is Phosphoglycerol transferase I (Escherichia coli O45:K1 (strain S88 / ExPEC)).